A 526-amino-acid polypeptide reads, in one-letter code: Arylsulfatase G (526 aa).

A signal peptide spans 1–16 (MGWLFLKVLLVGMVFS). The Ca(2+) site is built by aspartate 44, aspartate 45, and cysteine 84. Catalysis depends on cysteine 84, which acts as the Nucleophile. The residue at position 84 (cysteine 84) is a 3-oxoalanine (Cys). N-linked (GlcNAc...) asparagine glycosylation is present at asparagine 117. Lysine 137 contacts substrate. Histidine 139 is a catalytic residue. Serine 162 lines the substrate pocket. The N-linked (GlcNAc...) asparagine glycan is linked to asparagine 215. Histidine 251 serves as a coordination point for substrate. Ca(2+) contacts are provided by aspartate 302 and asparagine 303. Asparagine 356 and asparagine 497 each carry an N-linked (GlcNAc...) asparagine glycan.

Belongs to the sulfatase family. The cofactor is Ca(2+). In terms of processing, N-glycosylated with both high mannose and complex type sugars. The conversion to 3-oxoalanine (also known as C-formylglycine, FGly), of a serine or cysteine residue in prokaryotes and of a cysteine residue in eukaryotes, is critical for catalytic activity. Post-translationally, 63-kDa precursor undergoes proteolytic processing in two steps, yielding two fragments in the first step (apparent molecular masses of 44 and 18 kDa). In the second step, the 44-kDa fragment is processed further to the 34- and 10-kDa chains. The 10-kDa chain is a cleavage product of the 44-kDa fragment but linked to the 18-kDa chain through a disulfide bridge.

The protein resides in the lysosome. The enzyme catalyses an aryl sulfate + H2O = a phenol + sulfate + H(+). The catalysed reaction is Hydrolysis of the 3-sulfate groups of the N-sulfo-D-glucosamine 3-O-sulfate units of heparin.. Functionally, displays arylsulfatase activity at acidic pH towards the artificial substrate p-nitrocatechol sulfate. Catalyzes the hydrolysis of the 3-sulfate groups of the N-sulfo-D-glucosamine 3-O-sulfate units of heparin. In Rattus norvegicus (Rat), this protein is Arylsulfatase G (Arsg).